We begin with the raw amino-acid sequence, 174 residues long: 5-hydroxymethyl-dUMP N-hydrolase (174 aa).

N-acetylalanine is present on Ala-2. Gly-27 provides a ligand contact to 5-hydroxymethyl-dUMP. Ser-28 bears the Phosphoserine mark. Ile-29, Arg-30, Gly-31, Ser-98, Gly-100, and Glu-104 together coordinate 5-hydroxymethyl-dUMP. Phosphoserine is present on Ser-98. 4 positions are modified to phosphoserine: Ser-123, Ser-128, Ser-138, and Ser-169. Ser-128 provides a ligand contact to 5-hydroxymethyl-dUMP.

Belongs to the 2'-deoxynucleoside 5'-phosphate N-hydrolase 1 family. As to quaternary structure, monomer and homodimer. As to expression, expressed at low levels in brain, colon, lung, peripheral blood leukocytes, placenta, small intestine, and thymus. Expressed at high levels in heart, kidney, liver, skeletal muscle and spleen. Overexpressed in a significant proportion of breast cancers.

It is found in the cytoplasm. The protein resides in the nucleus. The enzyme catalyses 5-hydroxymethyl-dUMP + H2O = 5-hydroxymethyluracil + 2-deoxy-D-ribose 5-phosphate. Its activity is regulated as follows. Inhibited by AMP and GMP. In terms of biological role, part of a nucleotide salvage pathway that eliminates epigenetically modified 5-hydroxymethyl-dCMP (hmdCMP) in a two-step process entailing deamination to cytotoxic 5-hydroxymethyl-dUMP (hmdUMP), followed by its hydrolysis into 5-hydroxymethyluracil (hmU) and 2-deoxy-D-ribose 5-phosphate (deoxyribosephosphate). Catalyzes the second step in that pathway, the hydrolysis of the N-glycosidic bond in hmdUMP, degrading this cytotoxic nucleotide to avoid its genomic integration. This Homo sapiens (Human) protein is 5-hydroxymethyl-dUMP N-hydrolase.